The chain runs to 539 residues: CTP synthase (539 aa).

Residues 1-268 (MSFKSIFLTG…SDFLLNKLGF (268 aa)) are amidoligase domain. S14 serves as a coordination point for CTP. S14 contacts UTP. Position 15-20 (15-20 (SLGKGL)) interacts with ATP. Residue Y55 coordinates L-glutamine. D72 serves as a coordination point for ATP. 2 residues coordinate Mg(2+): D72 and E142. CTP is bound by residues 149-151 (DIE), 188-193 (KTKPTQ), and K224. UTP-binding positions include 188 to 193 (KTKPTQ) and K224. Position 242 (L242) interacts with ATP. A Glutamine amidotransferase type-1 domain is found at 294–532 (RIGLVGKYLE…IRAAKAYSLE (239 aa)). G353 serves as a coordination point for L-glutamine. C380 (nucleophile; for glutamine hydrolysis) is an active-site residue. Residues 381-384 (LGMQ), E404, and R460 each bind L-glutamine. Active-site residues include H505 and E507.

The protein belongs to the CTP synthase family. As to quaternary structure, homotetramer.

The enzyme catalyses UTP + L-glutamine + ATP + H2O = CTP + L-glutamate + ADP + phosphate + 2 H(+). It carries out the reaction L-glutamine + H2O = L-glutamate + NH4(+). The catalysed reaction is UTP + NH4(+) + ATP = CTP + ADP + phosphate + 2 H(+). It functions in the pathway pyrimidine metabolism; CTP biosynthesis via de novo pathway; CTP from UDP: step 2/2. With respect to regulation, allosterically activated by GTP, when glutamine is the substrate; GTP has no effect on the reaction when ammonia is the substrate. The allosteric effector GTP functions by stabilizing the protein conformation that binds the tetrahedral intermediate(s) formed during glutamine hydrolysis. Inhibited by the product CTP, via allosteric rather than competitive inhibition. In terms of biological role, catalyzes the ATP-dependent amination of UTP to CTP with either L-glutamine or ammonia as the source of nitrogen. May be involved in lipopolysaccharide biosynthesis, potentially channelling CTP directly to CMP-KDO synthetase. Regulates intracellular CTP levels through interactions with the four ribonucleotide triphosphates. The chain is CTP synthase from Chlamydia trachomatis serovar D (strain ATCC VR-885 / DSM 19411 / UW-3/Cx).